The chain runs to 973 residues: Mediator of RNA polymerase II transcription subunit 16 (973 aa).

It belongs to the Mediator complex subunit 16 family. Component of the Mediator complex.

It is found in the nucleus. Functionally, component of the Mediator complex, a coactivator involved in the regulated transcription of nearly all RNA polymerase II-dependent genes. Mediator functions as a bridge to convey information from gene-specific regulatory proteins to the basal RNA polymerase II transcription machinery. Mediator is recruited to promoters by direct interactions with regulatory proteins and serves as a scaffold for the assembly of a functional preinitiation complex with RNA polymerase II and the general transcription factors. This chain is Mediator of RNA polymerase II transcription subunit 16 (SIN4), found in Candida glabrata (strain ATCC 2001 / BCRC 20586 / JCM 3761 / NBRC 0622 / NRRL Y-65 / CBS 138) (Yeast).